Reading from the N-terminus, the 194-residue chain is Histone H1.0 (194 aa).

N-acetylmethionine is present on M1. Positions 1–11 are enriched in low complexity; that stretch reads MTENSTSAPAA. A disordered region spans residues 1-28; sequence MTENSTSAPAAKPKRAKASKKSTDHPKY. At T2 the chain carries N-acetylthreonine; in Histone H1.0, N-terminally processed. Residues 24–97 form the H15 domain; sequence DHPKYSDMIV…GASGSFRLAK (74 aa). Residue R42 is modified to Citrulline. Residues 86–194 form a disordered region; it reads GVGASGSFRL…SSAKRASKKK (109 aa). S104 carries the ADP-ribosylserine modification. The segment covering 105–194 has biased composition (basic residues); that stretch reads VAFKKTKKEV…SSAKRASKKK (90 aa).

This sequence belongs to the histone H1/H5 family. ADP-ribosylated on Ser-104 in response to DNA damage.

It is found in the nucleus. The protein localises to the chromosome. Functionally, histones H1 are necessary for the condensation of nucleosome chains into higher-order structures. The histones H1.0 are found in cells that are in terminal stages of differentiation or that have low rates of cell division. This Mus musculus (Mouse) protein is Histone H1.0 (H1-0).